An 827-amino-acid polypeptide reads, in one-letter code: Polyhomeotic-like protein 2 (827 aa).

Disordered regions lie at residues 1-78 (MEKE…QYLQ), 282-316 (GLGA…SDLT), and 482-545 (QEPT…PPQA). The span at 9–38 (SVASSASVTIPSTTSVSTSTSAGTLSNSSS) shows a compositional bias: low complexity. Positions 485 to 498 (TRTELRQSDKESQV) are enriched in basic and acidic residues. Positions 517–538 (AMTSGSGNNAPTVTGSAPQNGE) are enriched in polar residues. Positions 540–570 (KPPPQAVVKPQILTHVIEGFVIQEGAEPFPV) match the HD1 motif. An FCS-type zinc finger spans residues 609-643 (NNQPEPVRTCEFCGNVDFAFNFKRSKRFCSTVCAK). Cys618, Cys621, Cys637, and Cys641 together coordinate Zn(2+). The interval 653 to 730 (MGLFPGKSSP…EPISPLSNSS (78 aa)) is disordered. Residues 661–675 (SPEDTKKPKASDESP) are compositionally biased toward basic and acidic residues. Polar residues-rich tracts occupy residues 687 to 696 (PSIQTTTGAS) and 708 to 717 (GESSQCSDMS). An SAM domain is found at 763-827 (WNVEDVYEFI…FARISMLKDS (65 aa)).

Component of a PRC1-like complex. Isoform 1 expression is stronger at the posterior border than in the anterior region within individual somites; On the contrary, isoform 2 expression is higher at the posterior border.

Its subcellular location is the nucleus. Component of a Polycomb group (PcG) multiprotein PRC1-like complex, a complex class required to maintain the transcriptionally repressive state of many genes, including Hox genes, throughout development. PcG PRC1 complex acts via chromatin remodeling and modification of histones; it mediates monoubiquitination of histone H2A 'Lys-119', rendering chromatin heritably changed in its expressibility. In Danio rerio (Zebrafish), this protein is Polyhomeotic-like protein 2 (phc2).